The chain runs to 453 residues: Bifunctional protein GlmU (453 aa).

A pyrophosphorylase region spans residues M1–R226. Residues L7–G10, K21, Q73, and G78–T79 each bind UDP-N-acetyl-alpha-D-glucosamine. Residue D103 coordinates Mg(2+). Positions 140, 155, 170, and 224 each coordinate UDP-N-acetyl-alpha-D-glucosamine. N224 provides a ligand contact to Mg(2+). The linker stretch occupies residues K227–A247. The interval G248 to T453 is N-acetyltransferase. The UDP-N-acetyl-alpha-D-glucosamine site is built by R329 and K347. The Proton acceptor role is filled by H359. Residues Y362 and N373 each coordinate UDP-N-acetyl-alpha-D-glucosamine. Acetyl-CoA is bound by residues A376, N382–Y383, S401, A419, and R436.

It in the N-terminal section; belongs to the N-acetylglucosamine-1-phosphate uridyltransferase family. This sequence in the C-terminal section; belongs to the transferase hexapeptide repeat family. As to quaternary structure, homotrimer. It depends on Mg(2+) as a cofactor.

The protein resides in the cytoplasm. The enzyme catalyses alpha-D-glucosamine 1-phosphate + acetyl-CoA = N-acetyl-alpha-D-glucosamine 1-phosphate + CoA + H(+). It carries out the reaction N-acetyl-alpha-D-glucosamine 1-phosphate + UTP + H(+) = UDP-N-acetyl-alpha-D-glucosamine + diphosphate. It participates in nucleotide-sugar biosynthesis; UDP-N-acetyl-alpha-D-glucosamine biosynthesis; N-acetyl-alpha-D-glucosamine 1-phosphate from alpha-D-glucosamine 6-phosphate (route II): step 2/2. Its pathway is nucleotide-sugar biosynthesis; UDP-N-acetyl-alpha-D-glucosamine biosynthesis; UDP-N-acetyl-alpha-D-glucosamine from N-acetyl-alpha-D-glucosamine 1-phosphate: step 1/1. It functions in the pathway bacterial outer membrane biogenesis; LPS lipid A biosynthesis. Catalyzes the last two sequential reactions in the de novo biosynthetic pathway for UDP-N-acetylglucosamine (UDP-GlcNAc). The C-terminal domain catalyzes the transfer of acetyl group from acetyl coenzyme A to glucosamine-1-phosphate (GlcN-1-P) to produce N-acetylglucosamine-1-phosphate (GlcNAc-1-P), which is converted into UDP-GlcNAc by the transfer of uridine 5-monophosphate (from uridine 5-triphosphate), a reaction catalyzed by the N-terminal domain. This Cyanothece sp. (strain PCC 7425 / ATCC 29141) protein is Bifunctional protein GlmU.